Reading from the N-terminus, the 343-residue chain is Heat-inducible transcription repressor HrcA (343 aa).

This sequence belongs to the HrcA family.

Its function is as follows. Negative regulator of class I heat shock genes (grpE-dnaK-dnaJ and groELS operons). Prevents heat-shock induction of these operons. The sequence is that of Heat-inducible transcription repressor HrcA from Clostridium botulinum (strain Alaska E43 / Type E3).